The following is a 448-amino-acid chain: Argininosuccinate synthase (448 aa).

Residues Ala-17–Ser-25 and Ala-43 contribute to the ATP site. L-citrulline is bound at residue Tyr-99. ATP is bound by residues Gly-129 and Thr-131. Residues Thr-131, Asn-135, and Asp-136 each contribute to the L-aspartate site. An L-citrulline-binding site is contributed by Asn-135. Asp-136 is a binding site for ATP. L-citrulline-binding residues include Arg-139 and Ser-192. Position 194 (Asp-194) interacts with ATP. Residues Thr-201, Glu-203, and Glu-280 each coordinate L-citrulline.

Belongs to the argininosuccinate synthase family. Type 2 subfamily. Homotetramer.

Its subcellular location is the cytoplasm. It catalyses the reaction L-citrulline + L-aspartate + ATP = 2-(N(omega)-L-arginino)succinate + AMP + diphosphate + H(+). It functions in the pathway amino-acid biosynthesis; L-arginine biosynthesis; L-arginine from L-ornithine and carbamoyl phosphate: step 2/3. This Pectobacterium atrosepticum (strain SCRI 1043 / ATCC BAA-672) (Erwinia carotovora subsp. atroseptica) protein is Argininosuccinate synthase.